Here is a 206-residue protein sequence, read N- to C-terminus: Probable nicotinate-nucleotide adenylyltransferase (206 aa).

The protein belongs to the NadD family.

The enzyme catalyses nicotinate beta-D-ribonucleotide + ATP + H(+) = deamido-NAD(+) + diphosphate. Its pathway is cofactor biosynthesis; NAD(+) biosynthesis; deamido-NAD(+) from nicotinate D-ribonucleotide: step 1/1. Functionally, catalyzes the reversible adenylation of nicotinate mononucleotide (NaMN) to nicotinic acid adenine dinucleotide (NaAD). This chain is Probable nicotinate-nucleotide adenylyltransferase, found in Paenarthrobacter aurescens (strain TC1).